The primary structure comprises 159 residues: Putative ribosomal RNA large subunit methyltransferase H (159 aa).

S-adenosyl-L-methionine is bound by residues L76, G108, and F127 to F132.

Belongs to the RNA methyltransferase RlmH family.

The protein resides in the cytoplasm. It catalyses the reaction pseudouridine(1915) in 23S rRNA + S-adenosyl-L-methionine = N(3)-methylpseudouridine(1915) in 23S rRNA + S-adenosyl-L-homocysteine + H(+). Its function is as follows. Specifically methylates the pseudouridine at position 1915 (m3Psi1915) in 23S rRNA. The polypeptide is Putative ribosomal RNA large subunit methyltransferase H (Methanococcus maripaludis (strain C5 / ATCC BAA-1333)).